A 306-amino-acid chain; its full sequence is D-alanine--D-alanine ligase (306 aa).

The region spanning 101–303 (KQVWQAVGLP…FSQLVVKILE (203 aa)) is the ATP-grasp domain. 134 to 189 (FTHLGLPLIVKPSREGSSVGMSKVNTLSELPAALEEAFRHDDDILVEKWLSGPEYT) serves as a coordination point for ATP. Positions 257, 270, and 272 each coordinate Mg(2+).

The protein belongs to the D-alanine--D-alanine ligase family. Mg(2+) serves as cofactor. Requires Mn(2+) as cofactor.

Its subcellular location is the cytoplasm. It catalyses the reaction 2 D-alanine + ATP = D-alanyl-D-alanine + ADP + phosphate + H(+). It participates in cell wall biogenesis; peptidoglycan biosynthesis. In terms of biological role, cell wall formation. This chain is D-alanine--D-alanine ligase, found in Pectobacterium carotovorum subsp. carotovorum (strain PC1).